An 80-amino-acid chain; its full sequence is NAD(P)H-quinone oxidoreductase subunit O (80 aa).

Belongs to the complex I NdhO subunit family. NDH-1 can be composed of about 15 different subunits; different subcomplexes with different compositions have been identified which probably have different functions.

The protein localises to the cellular thylakoid membrane. It catalyses the reaction a plastoquinone + NADH + (n+1) H(+)(in) = a plastoquinol + NAD(+) + n H(+)(out). The enzyme catalyses a plastoquinone + NADPH + (n+1) H(+)(in) = a plastoquinol + NADP(+) + n H(+)(out). Functionally, NDH-1 shuttles electrons from an unknown electron donor, via FMN and iron-sulfur (Fe-S) centers, to quinones in the respiratory and/or the photosynthetic chain. The immediate electron acceptor for the enzyme in this species is believed to be plastoquinone. Couples the redox reaction to proton translocation, and thus conserves the redox energy in a proton gradient. Cyanobacterial NDH-1 also plays a role in inorganic carbon-concentration. The sequence is that of NAD(P)H-quinone oxidoreductase subunit O from Prochlorococcus marinus (strain MIT 9515).